Reading from the N-terminus, the 194-residue chain is uncharacterized protein (194 aa).

This is an uncharacterized protein from Methanocaldococcus jannaschii (strain ATCC 43067 / DSM 2661 / JAL-1 / JCM 10045 / NBRC 100440) (Methanococcus jannaschii).